A 938-amino-acid chain; its full sequence is Cyclin-dependent kinase-like 5 (938 aa).

The 285-residue stretch at phenylalanine 13 to phenylalanine 297 folds into the Protein kinase domain. Residues valine 19 to valine 27 and lysine 42 each bind ATP. The Proton acceptor role is filled by aspartate 135. Disordered regions lie at residues glutamine 298–asparagine 348, lysine 382–lysine 566, serine 646–glutamine 865, and histidine 877–glutamine 938. Polar residues-rich tracts occupy residues glutamate 319 to lysine 331 and lysine 382 to isoleucine 402. Phosphoserine is present on serine 407. A compositionally biased stretch (basic and acidic residues) spans serine 407–phenylalanine 417. Polar residues-rich tracts occupy residues leucine 434–glutamate 462, isoleucine 473–tyrosine 482, and aspartate 494–asparagine 548. Residue serine 479 is modified to Phosphoserine. Basic and acidic residues-rich tracts occupy residues asparagine 549–arginine 559 and glutamine 679–tyrosine 704. Serine 720 is subject to Phosphoserine. Over residues histidine 728–asparagine 748 the composition is skewed to polar residues. At serine 761 the chain carries Phosphoserine. Basic and acidic residues-rich tracts occupy residues aspartate 769–glycine 778 and arginine 817–serine 827. Positions serine 880–glutamine 891 are enriched in polar residues.

Belongs to the protein kinase superfamily. CMGC Ser/Thr protein kinase family. CDC2/CDKX subfamily. As to quaternary structure, interacts with MECP2. In terms of processing, autophosphorylated.

It localises to the nucleus. The protein localises to the cytoplasm. The protein resides in the cytoskeleton. It is found in the cilium basal body. Its subcellular location is the microtubule organizing center. It localises to the centrosome. The catalysed reaction is L-seryl-[protein] + ATP = O-phospho-L-seryl-[protein] + ADP + H(+). It carries out the reaction L-threonyl-[protein] + ATP = O-phospho-L-threonyl-[protein] + ADP + H(+). In terms of biological role, mediates phosphorylation of MECP2. May regulate ciliogenesis. This chain is Cyclin-dependent kinase-like 5, found in Mus musculus (Mouse).